The following is a 101-amino-acid chain: Apolipoprotein C-II (101 aa).

The first 22 residues, 1 to 22 (MGTRLLPALFLVLLVLGFEVQG), serve as a signal peptide directing secretion. Residues 23–38 (TQQPQQDEMPSPTFLT) are O-glycosylated at one site. The segment at 66–74 (AVDEKLRDL) is lipid binding. The lipoprotein lipase cofactor stretch occupies residues 78-101 (STAAMSTYTGIFTDQVLSVLKGEE).

The protein belongs to the apolipoprotein C2 family. Proapolipoprotein C-II is synthesized as a sialic acid containing glycoprotein which is subsequently desialylated prior to its proteolytic processing. Post-translationally, proapolipoprotein C-II, the major form found in plasma undergoes proteolytic cleavage of its N-terminal hexapeptide to generate apolipoprotein C-II, which occurs as the minor form in plasma. As to expression, liver and intestine.

The protein localises to the secreted. Component of chylomicrons, very low-density lipoproteins (VLDL), low-density lipoproteins (LDL), and high-density lipoproteins (HDL) in plasma. Plays an important role in lipoprotein metabolism as an activator of lipoprotein lipase. Both proapolipoprotein C-II and apolipoprotein C-II can activate lipoprotein lipase. In normolipidemic individuals, it is mainly distributed in the HDL, whereas in hypertriglyceridemic individuals, predominantly found in the VLDL and LDL. This is Apolipoprotein C-II (APOC2) from Homo sapiens (Human).